The primary structure comprises 139 residues: Large ribosomal subunit protein bL21 (139 aa).

The protein belongs to the bacterial ribosomal protein bL21 family. As to quaternary structure, part of the 50S ribosomal subunit. Contacts protein L20.

Its function is as follows. This protein binds to 23S rRNA in the presence of protein L20. This Prochlorococcus marinus (strain NATL2A) protein is Large ribosomal subunit protein bL21.